The sequence spans 285 residues: Hydroxyethylthiazole kinase 1 (285 aa).

Met48 lines the substrate pocket. Residues Arg124 and Ser183 each contribute to the ATP site. Residue Gly210 coordinates substrate.

This sequence belongs to the Thz kinase family. Mg(2+) serves as cofactor.

The catalysed reaction is 5-(2-hydroxyethyl)-4-methylthiazole + ATP = 4-methyl-5-(2-phosphooxyethyl)-thiazole + ADP + H(+). It functions in the pathway cofactor biosynthesis; thiamine diphosphate biosynthesis; 4-methyl-5-(2-phosphoethyl)-thiazole from 5-(2-hydroxyethyl)-4-methylthiazole: step 1/1. Functionally, catalyzes the phosphorylation of the hydroxyl group of 4-methyl-5-beta-hydroxyethylthiazole (THZ). In Methanosphaera stadtmanae (strain ATCC 43021 / DSM 3091 / JCM 11832 / MCB-3), this protein is Hydroxyethylthiazole kinase 1.